The following is a 2364-amino-acid chain: Cytotoxin-L (2364 aa).

Residues 1–91 are four-helical bundle; it reads MNLVNKAQLQ…EVLELKNNSL (91 aa). The GT44 domain occupies 96–468; the sequence is KNLHFIWIGG…APDVRSTINL (373 aa). A glucosyltransferase region region spans residues 96 to 468; the sequence is KNLHFIWIGG…APDVRSTINL (373 aa). UDP-alpha-D-glucose is bound by residues 101-103, Asn139, 265-270, and 286-288; these read IWI, LAAASD, and DVD. Residues Asp288, Glu515, and Ser518 each coordinate Mg(2+). 518-520 contacts UDP-alpha-D-glucose; that stretch reads SLW. The autoprocessing region stretch occupies residues 544-799; sequence GEDDNLDFAQ…KSKYLHELST (256 aa). Zn(2+) is bound by residues Glu545 and Asp546. One can recognise a Peptidase C80 domain in the interval 567-774; sequence LSSMKTRNKE…EESIIKDISS (208 aa). 1D-myo-inositol hexakisphosphate contacts are provided by Tyr577, Lys600, and Lys647. His653 provides a ligand contact to Zn(2+). Catalysis depends on His653, which acts as the For protease activity. Cys698 serves as the catalytic Nucleophile; for protease activity. His757 is a binding site for Zn(2+). Residues Lys764, Lys775, and Lys792 each coordinate 1D-myo-inositol hexakisphosphate. The interval 800–1500 is translocation region; that stretch reads LLQEIRNNAN…ESIIRNIYMP (701 aa). Interaction with host SEMA6A and SEMA6B regions lie at residues 1433-1438, 1466-1471, 1484-1495, 1504-1511, and 1596-1601; these read CMKLIE, DNETKY, FTAEFSNESIIR, NLFIYSSK, and YNNLDP. 20 Cell wall-binding repeats span residues 1813–1832, 1833–1852, 1854–1873, 1876–1895, 1926–1945, 1946–1965, 1967–1986, 1987–2006, 2007–2026, 2057–2076, 2077–2097, 2099–2118, 2119–2138, 2139–2158, 2209–2224, 2227–2249, 2250–2269, 2270–2289, 2320–2339, and 2340–2359; these read EFGL…FGNM, VSGL…PKNN, ITGF…TKSG, SIGE…QGIL, FIGK…NYRA, AVEW…KTGE, LKGL…NGIM, QTGF…DGVM, QVGY…NGER, YNGI…SNTA, VVGW…NRAE, CIGL…NGIR, QLGF…SGKI, ELGY…SGLV, ETGW…YFDP, KKAY…NGIM, RTGL…DGKM, QFGY…DGKM, YTGW…EYIA, and ATGS…DTAE. The receptor-binding (CROPS) region stretch occupies residues 1835-2364; sequence GLIYINDSLY…PDTAELVVSE (530 aa).

It belongs to the clostridial glucosylating toxin (LCGT) family. Homomultimer; forms an inactive homomultimer at pH 8, which dissociates at pH 4, leading to cytotoxicity. Interacts with host SEMA6A; interaction promotes toxin entry into host cell. Interacts with host SEMA6B; interaction promotes toxin entry into host cell. Zn(2+) is required as a cofactor. Mn(2+) serves as cofactor. It depends on Mg(2+) as a cofactor. Undergoes autocatalytic cleavage to release the N-terminal part (Glucosyltransferase TcsL), which constitutes the active part of the toxin, in the host cytosol. 1D-myo-inositol hexakisphosphate-binding (InsP6) activates the peptidase C80 domain and promotes autoprocessing.

The protein resides in the secreted. Its subcellular location is the host endosome membrane. It is found in the host cytoplasm. It localises to the host cytosol. The protein localises to the host cell membrane. The catalysed reaction is L-threonyl-[protein] + UDP-alpha-D-glucose = 3-O-(alpha-D-glucosyl)-L-threonyl-[protein] + UDP + H(+). Protease activity is activated upon binding to 1D-myo-inositol hexakisphosphate (InsP6), which induces conformational reorganization. Precursor of a cytotoxin that targets the vascular endothelium, inducing an anti-inflammatory effect and resulting in lethal toxic shock syndrome. TcsL constitutes the main toxin that mediates the pathology of P.sordellii infection, an anaerobic Gram-positive bacterium found in soil and in the gastrointestinal and vaginal tracts of animals and humans; although the majority of carriers are asymptomatic, pathogenic P.sordellii infections arise rapidly and are highly lethal. This form constitutes the precursor of the toxin: it enters into host cells and mediates autoprocessing to release the active toxin (Glucosyltransferase TcsL) into the host cytosol. Targets vascular endothelium by binding to the semaphorin proteins SEMA6A and SEMA6B, and enters host cells via clathrin-mediated endocytosis. Once entered into host cells, acidification in the endosome promotes the membrane insertion of the translocation region and formation of a pore, leading to translocation of the GT44 and peptidase C80 domains across the endosomal membrane. This activates the peptidase C80 domain and autocatalytic processing, releasing the N-terminal part (Glucosyltransferase TcsL), which constitutes the active part of the toxin, in the cytosol. Its function is as follows. Active form of the toxin, which is released into the host cytosol following autoprocessing and inactivates small GTPases. Acts by mediating monoglucosylation of small GTPases of the Ras (H-Ras/HRAS, K-Ras/KRAS, N-Ras/NRAS and Ral/RALA) family in host cells at the conserved threonine residue located in the switch I region ('Thr-37/35'), using UDP-alpha-D-glucose as the sugar donor. Also able to catalyze monoglucosylation of some members of the Rho family (Rac1 and Rap2A), but with less efficiency than with Ras proteins. Monoglucosylation of host small GTPases completely prevents the recognition of the downstream effector, blocking the GTPases in their inactive form and leading to apoptosis. Induces an anti-inflammatory effect, mainly by inactivating Ras proteins which results in blockage of the cell cycle and killing of immune cells. The absence or moderate local inflammatory response allows C.sordellii spreading in deep tissues, production of toxin which is released in the general circulation and causes a toxic shock syndrome. The protein is Cytotoxin-L of Paraclostridium sordellii (Clostridium sordellii).